The chain runs to 181 residues: MEGFHATTIFAIAHNGGFAMAGDGQVTFGNAVVMKHTARKVRRLYHNNVLAGFAGSVADAFTLFEKFEAKLEEYNGNLQRASVELAKEWRSDRVLRKLEAMLIVMDKQALLLISGTGEVIQPDDGILAIGSGGNYALSAGRALKRHAPGLSAREIAVAALETAGEICVYTNDQIVVEELTE.

Threonine 7 is a catalytic residue. Residues glycine 164, cysteine 167, and threonine 170 each contribute to the Na(+) site.

This sequence belongs to the peptidase T1B family. HslV subfamily. In terms of assembly, a double ring-shaped homohexamer of HslV is capped on each side by a ring-shaped HslU homohexamer. The assembly of the HslU/HslV complex is dependent on binding of ATP.

Its subcellular location is the cytoplasm. The enzyme catalyses ATP-dependent cleavage of peptide bonds with broad specificity.. Its activity is regulated as follows. Allosterically activated by HslU binding. In terms of biological role, protease subunit of a proteasome-like degradation complex believed to be a general protein degrading machinery. This Shouchella clausii (strain KSM-K16) (Alkalihalobacillus clausii) protein is ATP-dependent protease subunit HslV.